The following is a 60-amino-acid chain: Arabinogalactan protein 14 (60 aa).

The first 28 residues, 1 to 28 (MEAMKMKLYVVVLVAVIAFSTVHQTVAA), serve as a signal peptide directing secretion. 4-hydroxyproline occurs at positions 32, 34, and 36. Residues Pro32, Pro34, and Pro36 are each glycosylated (O-linked (Ara...) hydroxyproline). Residue Ser38 is the site of GPI-anchor amidated serine attachment. A propeptide spans 39–60 (DASSFIPTFFASVAVMAFGFFF) (removed in mature form).

Belongs to the AG-peptide AGP family. In terms of processing, contains 4-hydroxyproline; hydroxylated on Pro-32, Pro-34 and Pro-36. Post-translationally, O-glycosylated on hydroxyprolines; noncontiguous hydroxylproline residues are glycosylated with arabinogalactan.

It localises to the cell membrane. Its function is as follows. Proteoglycan that seems to be implicated in diverse developmental roles such as differentiation, cell-cell recognition, embryogenesis and programmed cell death. Involved in the regulation of root hair elongation. The sequence is that of Arabinogalactan protein 14 from Arabidopsis thaliana (Mouse-ear cress).